The sequence spans 620 residues: Coenzyme F420-dependent sulfite reductase (620 aa).

Positions 6 to 35 (LNEIVDSGVCARCGTCTIVCPNGILTFDER) constitute a 4Fe-4S ferredoxin-type 1 domain. [4Fe-4S] cluster-binding residues include Cys15, Cys18, Cys21, Cys25, Cys428, Cys434, Cys468, Cys472, Cys495, Cys498, Cys501, Cys505, Cys524, Cys527, Cys530, and Cys534. Cys472 lines the siroheme pocket. 4Fe-4S ferredoxin-type domains lie at 486 to 515 (KYPKVNEEKCNGCGRCAEVCKVEAIDIRGE) and 520 to 544 (NYNVCVGCGKCIKNCPNEAREVKEE).

This sequence belongs to the nitrite and sulfite reductase 4Fe-4S domain family. [4Fe-4S] cluster serves as cofactor. Siroheme is required as a cofactor.

The catalysed reaction is 3 oxidized coenzyme F420-(gamma-L-Glu)(n) + hydrogen sulfide + 3 H2O + 2 H(+) = 3 reduced coenzyme F420-(gamma-L-Glu)(n) + sulfite. Functionally, catalyzes the reduction of sulfite to sulfide using reduced F420 as the electron source. Involved in sulfite detoxification and assimilation. Cannot use NADH or NADPH. The chain is Coenzyme F420-dependent sulfite reductase from Methanocaldococcus jannaschii (strain ATCC 43067 / DSM 2661 / JAL-1 / JCM 10045 / NBRC 100440) (Methanococcus jannaschii).